The primary structure comprises 49 residues: Large ribosomal subunit protein bL32c (49 aa).

A disordered region spans residues 1-23 (MTPKKRKSKSKKNLRKTNWKKKA).

It belongs to the bacterial ribosomal protein bL32 family.

Its subcellular location is the plastid. The protein localises to the chloroplast. This is Large ribosomal subunit protein bL32c from Oltmannsiellopsis viridis (Marine flagellate).